The chain runs to 424 residues: Neurotensin receptor type 1 (424 aa).

The Extracellular segment spans residues 1 to 67 (MHLNSSVQQG…TDIYSKVLVT (67 aa)). Asn-4, Asn-38, and Asn-42 each carry an N-linked (GlcNAc...) asparagine glycan. Residues 68–88 (AVYLALFVVGTVGNSVTAFTL) traverse the membrane as a helical segment. At 89 to 102 (ARKKSLQSLQSTVH) the chain is on the cytoplasmic side. The chain crosses the membrane as a helical span at residues 103 to 122 (YHLGSLALSDLLILLLAMPV). Residues 123–142 (ELYNFIWVHHPWAFGDAGCR) are Extracellular-facing. A disulfide bridge connects residues Cys-141 and Cys-224. Residues 143-164 (GYYFLRDACTYATALNVASLSV) traverse the membrane as a helical segment. The Cytoplasmic segment spans residues 165-184 (ERYLAICHPFKAKTLMSRSR). The helical transmembrane segment at 185–205 (TKKFISAIWLASALLAVPMLF) threads the bilayer. The Extracellular segment spans residues 206–234 (TMGLQNRSADGQHPGGLVCTPTVDTATVK). Asn-211 is a glycosylation site (N-linked (GlcNAc...) asparagine). The chain crosses the membrane as a helical span at residues 235–259 (VVIQVNTFMSFLFPMLIISILNTVI). The Cytoplasmic portion of the chain corresponds to 260-308 (ANKLTVMVHQAAEQGRGVCTVGTHNSLEHSTFNMSIEPGRVQALRHGVL). Residues 309 to 330 (VLRAVVIAFVVCWLPYHVRRLM) form a helical membrane-spanning segment. The neurotensin binding stretch occupies residues 326–349 (VRRLMFCYISDEQWTTFLFDFYHY). The Extracellular portion of the chain corresponds to 331–348 (FCYISDEQWTTFLFDFYH). A helical transmembrane segment spans residues 349–369 (YFYMLTNALFYVSSAINPILY). Residues 370–424 (NLVSANFRQVFLSTLACLCPGWRRRRKKRPTFSRKPNSMSSNHAFSTSATRETLY) lie on the Cytoplasmic side of the membrane. Residues Cys-386 and Cys-388 are each lipidated (S-palmitoyl cysteine). The interval 398-424 (RPTFSRKPNSMSSNHAFSTSATRETLY) is disordered. Over residues 403–424 (RKPNSMSSNHAFSTSATRETLY) the composition is skewed to polar residues.

The protein belongs to the G-protein coupled receptor 1 family. Neurotensin receptor subfamily. NTSR1 sub-subfamily. In terms of assembly, interacts (palmitoylated form) with GNA11. Post-translationally, N-glycosylated. Palmitoylated; this is required for normal localization at membrane rafts and normal GNA11-mediated activation of down-stream signaling cascades. The palmitoylation level increases in response to neurotensin treatment.

Its subcellular location is the cell membrane. The protein resides in the membrane raft. G-protein coupled receptor for the tridecapeptide neurotensin (NTS). Signaling is effected via G proteins that activate a phosphatidylinositol-calcium second messenger system. Signaling leads to the activation of downstream MAP kinases and protects cells against apoptosis. The sequence is that of Neurotensin receptor type 1 (Ntsr1) from Mus musculus (Mouse).